The following is a 291-amino-acid chain: Segregation and condensation protein A (291 aa).

Belongs to the ScpA family. In terms of assembly, component of a cohesin-like complex composed of ScpA, ScpB and the Smc homodimer, in which ScpA and ScpB bind to the head domain of Smc. The presence of the three proteins is required for the association of the complex with DNA.

The protein localises to the cytoplasm. Participates in chromosomal partition during cell division. May act via the formation of a condensin-like complex containing Smc and ScpB that pull DNA away from mid-cell into both cell halves. This chain is Segregation and condensation protein A, found in Malacoplasma penetrans (strain HF-2) (Mycoplasma penetrans).